The sequence spans 294 residues: Cutinase (294 aa).

Positions 1–33 (MLRARPSHRLASAAAVVAATGAALLAGSSPAAA) are cleaved as a signal peptide. A disulfide bond links Cys36 and Cys107. Catalysis depends on Ser118, which acts as the Nucleophile. The cysteines at positions 180 and 187 are disulfide-linked. Asp184 is an active-site residue. His198 (proton donor/acceptor) is an active-site residue. The disordered stretch occupies residues 222–241 (GTPTTPTPTPTPTPVPTTCV). Over residues 226-236 (TPTPTPTPTPV) the composition is skewed to pro residues. A may be involved in substrate binding region spans residues 240–294 (CVRDSTRDHVAADRAVSLYGRAYARGSRDSLGATSSYNVVSLQQVEGGWRLVTAC).

It belongs to the cutinase family.

The protein resides in the secreted. The catalysed reaction is cutin + H2O = cutin monomers.. It catalyses the reaction a tetradecanoate ester + H2O = an aliphatic alcohol + tetradecanoate + H(+). It carries out the reaction hexadecanoate ester + H2O = an aliphatic alcohol + hexadecanoate + H(+). The enzyme catalyses a butanoate ester + H2O = an aliphatic alcohol + butanoate + H(+). The catalysed reaction is an octanoate ester + H2O = an aliphatic alcohol + octanoate + H(+). In terms of biological role, catalyzes the hydrolysis of cutin, a polyester that forms the structure of plant cuticle. Shows esterase activity towards p-nitrophenol-linked aliphatic esters (pNP-aliphatic esters). Can depolymerize synthetic polyesters such as poly(epsilon-caprolactone) (PCL) and poly(1,3-propylene adipate) (PPA). Exhibits some activity on poly(lactic acid) (PLA). Can bind but not hydrolyze poly(hydroxybutyrate) (PHB). This is Cutinase from Kineococcus radiotolerans (strain ATCC BAA-149 / DSM 14245 / SRS30216).